A 311-amino-acid chain; its full sequence is Phosphoribosylamine--glycine ligase (311 aa).

Residues 1-191 (DPRVRKQYIQ…LVQVLLAACR (191 aa)) form the ATP-grasp domain.

The protein belongs to the GARS family.

It localises to the plastid. The protein resides in the chloroplast. It carries out the reaction 5-phospho-beta-D-ribosylamine + glycine + ATP = N(1)-(5-phospho-beta-D-ribosyl)glycinamide + ADP + phosphate + H(+). It participates in purine metabolism; IMP biosynthesis via de novo pathway; N(1)-(5-phospho-D-ribosyl)glycinamide from 5-phospho-alpha-D-ribose 1-diphosphate: step 2/2. The protein is Phosphoribosylamine--glycine ligase (PUR2) of Vigna unguiculata (Cowpea).